The primary structure comprises 126 residues: Holo-[acyl-carrier-protein] synthase (126 aa).

The Mg(2+) site is built by aspartate 9 and glutamate 58.

Belongs to the P-Pant transferase superfamily. AcpS family. Requires Mg(2+) as cofactor.

It is found in the cytoplasm. The catalysed reaction is apo-[ACP] + CoA = holo-[ACP] + adenosine 3',5'-bisphosphate + H(+). Functionally, transfers the 4'-phosphopantetheine moiety from coenzyme A to a Ser of acyl-carrier-protein. The sequence is that of Holo-[acyl-carrier-protein] synthase from Photorhabdus laumondii subsp. laumondii (strain DSM 15139 / CIP 105565 / TT01) (Photorhabdus luminescens subsp. laumondii).